The sequence spans 131 residues: Large-conductance mechanosensitive channel (131 aa).

2 consecutive transmembrane segments (helical) span residues 14–34 (VIDL…VTSL) and 67–87 (GSFI…FIFI).

The protein belongs to the MscL family. In terms of assembly, homopentamer.

It is found in the cell membrane. Channel that opens in response to stretch forces in the membrane lipid bilayer. May participate in the regulation of osmotic pressure changes within the cell. The chain is Large-conductance mechanosensitive channel from Bacillus pumilus (strain SAFR-032).